We begin with the raw amino-acid sequence, 353 residues long: Rhodopsin (353 aa).

At 1–36 the chain is on the extracellular side; that stretch reads MNGTEGPYFYVPMVNTSGIVRSPYEYPQYYLVNPAA. Residues N2 and N15 are each glycosylated (N-linked (GlcNAc...) asparagine). A helical transmembrane segment spans residues 37–61; that stretch reads YARLGAYMFLLILVGFPINFLTLYV. The Cytoplasmic portion of the chain corresponds to 62 to 73; it reads TIEHKKLRTPLN. The chain crosses the membrane as a helical span at residues 74–96; it reads YILLNLAVADLFMVFGGFTTTMY. Topologically, residues 97–110 are extracellular; the sequence is TSMHGYFVLGRLGC. C110 and C187 form a disulfide bridge. Residues 111-133 traverse the membrane as a helical segment; that stretch reads NIEGFFATLGGEIALWSLVVLAI. A 'Ionic lock' involved in activated form stabilization motif is present at residues 134–136; that stretch reads ERW. Topologically, residues 134-152 are cytoplasmic; the sequence is ERWVVVCKPISNFRFGENH. A helical membrane pass occupies residues 153–173; it reads AIMGLAFTWLMALACAAPPLV. Over 174-202 the chain is Extracellular; that stretch reads GWSRYIPEGMQCSCGIDYYTRAEGFNNES. N200 is a glycosylation site (N-linked (GlcNAc...) asparagine). A helical transmembrane segment spans residues 203 to 224; sequence FVIYMFVCHFTVPLMVVFFCYG. Residues 225–252 are Cytoplasmic-facing; that stretch reads RLLCAVKEAAAAQQESETTQRAEREVTR. Residues 253–274 form a helical membrane-spanning segment; it reads MVIMMVVAFLVCWLPYASVAWW. The Extracellular portion of the chain corresponds to 275–286; sequence IFTHQGSEFGPV. The helical transmembrane segment at 287–308 threads the bilayer; sequence FMTIPAFFAKSSSIYNPMIYIC. K296 carries the N6-(retinylidene)lysine modification. Over 309–353 the chain is Cytoplasmic; sequence LNKQFRHCMITTLCCGKNPFEEEEGASTASKTEASSVSSSSVSPA. S-palmitoyl cysteine attachment occurs at residues C322 and C323. A disordered region spans residues 331–353; it reads EEGASTASKTEASSVSSSSVSPA. The span at 334–353 shows a compositional bias: low complexity; it reads ASTASKTEASSVSSSSVSPA.

This sequence belongs to the G-protein coupled receptor 1 family. Opsin subfamily. Post-translationally, phosphorylated on some or all of the serine and threonine residues present in the C-terminal region. In terms of processing, contains one covalently linked retinal chromophore.

It is found in the membrane. It localises to the cell projection. The protein resides in the cilium. Its subcellular location is the photoreceptor outer segment. In terms of biological role, photoreceptor required for image-forming vision at low light intensity. While most salt water fish species use retinal as chromophore, most freshwater fish use 3-dehydroretinal, or a mixture of retinal and 3-dehydroretinal. Light-induced isomerization of 11-cis to all-trans retinal triggers a conformational change that activates signaling via G-proteins. Subsequent receptor phosphorylation mediates displacement of the bound G-protein alpha subunit by arrestin and terminates signaling. The chain is Rhodopsin (rho) from Sarpa salpa (Salema).